The primary structure comprises 368 residues: 4-hydroxy-3-methylbut-2-en-1-yl diphosphate synthase (flavodoxin) (368 aa).

Positions 271, 274, 306, and 313 each coordinate [4Fe-4S] cluster.

It belongs to the IspG family. The cofactor is [4Fe-4S] cluster.

The enzyme catalyses (2E)-4-hydroxy-3-methylbut-2-enyl diphosphate + oxidized [flavodoxin] + H2O + 2 H(+) = 2-C-methyl-D-erythritol 2,4-cyclic diphosphate + reduced [flavodoxin]. It participates in isoprenoid biosynthesis; isopentenyl diphosphate biosynthesis via DXP pathway; isopentenyl diphosphate from 1-deoxy-D-xylulose 5-phosphate: step 5/6. Converts 2C-methyl-D-erythritol 2,4-cyclodiphosphate (ME-2,4cPP) into 1-hydroxy-2-methyl-2-(E)-butenyl 4-diphosphate. This Mannheimia succiniciproducens (strain KCTC 0769BP / MBEL55E) protein is 4-hydroxy-3-methylbut-2-en-1-yl diphosphate synthase (flavodoxin).